A 78-amino-acid chain; its full sequence is MATSGRLLCFCLVLGLVFESLGYSEARPPRDRKRTVTAKRYDPLAQRVDCGGSPCAFGCCENDVCRELDCEYAPPFGF.

Residues 1–21 (MATSGRLLCFCLVLGLVFESL) form the signal peptide. Positions 22–47 (GYSEARPPRDRKRTVTAKRYDPLAQR) are excised as a propeptide.

This sequence belongs to the teretoxin M (TM) superfamily. Post-translationally, contains 3 disulfide bonds. In terms of tissue distribution, expressed by the venom duct.

Its subcellular location is the secreted. The polypeptide is Teretoxin Tsu6.15 (Terebra subulata (Chocolate spotted auger)).